A 420-amino-acid chain; its full sequence is Gamma-glutamyl phosphate reductase (420 aa).

This sequence belongs to the gamma-glutamyl phosphate reductase family.

It localises to the cytoplasm. The enzyme catalyses L-glutamate 5-semialdehyde + phosphate + NADP(+) = L-glutamyl 5-phosphate + NADPH + H(+). It functions in the pathway amino-acid biosynthesis; L-proline biosynthesis; L-glutamate 5-semialdehyde from L-glutamate: step 2/2. Its function is as follows. Catalyzes the NADPH-dependent reduction of L-glutamate 5-phosphate into L-glutamate 5-semialdehyde and phosphate. The product spontaneously undergoes cyclization to form 1-pyrroline-5-carboxylate. This chain is Gamma-glutamyl phosphate reductase, found in Streptococcus pneumoniae (strain Hungary19A-6).